The chain runs to 335 residues: Foldase protein PrsA (335 aa).

An N-terminal signal peptide occupies residues 1 to 22 (MRSAKKLLSVLCLGVFILTFTA). C23 is lipidated: N-palmitoyl cysteine. A lipid anchor (S-diacylglycerol cysteine) is attached at C23. One can recognise a PpiC domain in the interval 194–285 (PNTMNVSHIL…FGYHIIKINS (92 aa)).

The protein belongs to the PrsA family.

The protein resides in the cell membrane. It catalyses the reaction [protein]-peptidylproline (omega=180) = [protein]-peptidylproline (omega=0). In terms of biological role, plays a major role in protein secretion by helping the post-translocational extracellular folding of several secreted proteins. This is Foldase protein PrsA from Clostridium botulinum (strain Loch Maree / Type A3).